The primary structure comprises 231 residues: Cytochrome c oxidase assembly factor 7A (231 aa).

Sel1-like repeat units lie at residues 34-66, 68-104, 108-145, 146-182, and 183-218; these read PDGCNRLAEYFENIKKNFESAAGILKINCDQNE, SESFYKLGAYYVTGKGGLPVDLKAAYSCFLKSCNKGG, IDSCHNVGLLAHDGRVNDEKADAVTARDYYNKACDGNF, AASCFNLSATYLQGAPGIPKDMNKALHFSEKACSLGH, and VWGCANASRMYKLGDGVAKNDEKAESLKNRARDLHK.

This sequence belongs to the hcp beta-lactamase family.

It localises to the mitochondrion intermembrane space. Functionally, may be required for assembly of mitochondrial respiratory chain complexes. The polypeptide is Cytochrome c oxidase assembly factor 7A (coa7-a) (Xenopus laevis (African clawed frog)).